A 122-amino-acid polypeptide reads, in one-letter code: ATP synthase epsilon chain (122 aa).

The protein belongs to the ATPase epsilon chain family. F-type ATPases have 2 components, CF(1) - the catalytic core - and CF(0) - the membrane proton channel. CF(1) has five subunits: alpha(3), beta(3), gamma(1), delta(1), epsilon(1). CF(0) has three main subunits: a, b and c.

It is found in the cell membrane. In terms of biological role, produces ATP from ADP in the presence of a proton gradient across the membrane. The protein is ATP synthase epsilon chain of Rhodococcus jostii (strain RHA1).